A 184-amino-acid polypeptide reads, in one-letter code: Peptide deformylase (184 aa).

Fe cation is bound by residues Cys96 and His138. Glu139 is an active-site residue. His142 is a Fe cation binding site.

Belongs to the polypeptide deformylase family. Requires Fe(2+) as cofactor.

It carries out the reaction N-terminal N-formyl-L-methionyl-[peptide] + H2O = N-terminal L-methionyl-[peptide] + formate. Functionally, removes the formyl group from the N-terminal Met of newly synthesized proteins. Requires at least a dipeptide for an efficient rate of reaction. N-terminal L-methionine is a prerequisite for activity but the enzyme has broad specificity at other positions. This is Peptide deformylase from Cytophaga hutchinsonii (strain ATCC 33406 / DSM 1761 / CIP 103989 / NBRC 15051 / NCIMB 9469 / D465).